The chain runs to 216 residues: Glutathione S-transferase 1, isoform B (216 aa).

A GST N-terminal domain is found at 1–80; it reads MDFYYLPGSA…YLVEKYGKPC (80 aa). Residues Ser9, 50–52, and 64–66 each bind glutathione; these read HCV and ESR. The region spanning 89–210 is the GST C-terminal domain; sequence DPQKRAIVNQ…RSWAEAARPF (122 aa).

Belongs to the GST superfamily. Theta family. As to quaternary structure, homodimer.

The catalysed reaction is RX + glutathione = an S-substituted glutathione + a halide anion + H(+). Its function is as follows. Conjugation of reduced glutathione to a wide number of exogenous and endogenous hydrophobic electrophiles. The chain is Glutathione S-transferase 1, isoform B from Anopheles gambiae (African malaria mosquito).